The primary structure comprises 67 residues: ATP synthase protein 8 (67 aa).

Residues 8–24 form a helical membrane-spanning segment; that stretch reads TWFITILSMLMTLFILF. An N6-acetyllysine; alternate modification is found at lysine 54. N6-succinyllysine; alternate is present on lysine 54. Lysine 57 bears the N6-acetyllysine mark.

The protein belongs to the ATPase protein 8 family. F-type ATPases have 2 components, CF(1) - the catalytic core - and CF(0) - the membrane proton channel. Component of an ATP synthase complex composed of ATP5PB, ATP5MC1, ATP5F1E, ATP5PD, ATP5ME, ATP5PF, ATP5MF, MT-ATP6, MT-ATP8, ATP5F1A, ATP5F1B, ATP5F1D, ATP5F1C, ATP5PO, ATP5MG, ATP5MK and ATP5MJ. Interacts with PRICKLE3.

Its subcellular location is the mitochondrion membrane. Functionally, mitochondrial membrane ATP synthase (F(1)F(0) ATP synthase or Complex V) produces ATP from ADP in the presence of a proton gradient across the membrane which is generated by electron transport complexes of the respiratory chain. F-type ATPases consist of two structural domains, F(1) - containing the extramembraneous catalytic core and F(0) - containing the membrane proton channel, linked together by a central stalk and a peripheral stalk. During catalysis, ATP synthesis in the catalytic domain of F(1) is coupled via a rotary mechanism of the central stalk subunits to proton translocation. Part of the complex F(0) domain. Minor subunit located with subunit a in the membrane. The polypeptide is ATP synthase protein 8 (MT-ATP8) (Vicugna pacos (Alpaca)).